The primary structure comprises 561 residues: Centromere protein T (561 aa).

A disordered region spans residues 1 to 78; it reads MADHNPDGDP…IGRSAHVQAR (78 aa). Residues 18–27 show a composition bias toward basic and acidic residues; sequence RVLDTADPRT. Polar residues predominate over residues 45–57; the sequence is TASSRRLSGQTKT. Position 47 is a phosphoserine (Ser-47). Thr-85 is modified (phosphothreonine). The segment at 93 to 421 is flexible stalk domain; the sequence is ILLTAPESSI…RHHQFPEPAP (329 aa). Disordered regions lie at residues 114-134, 256-293, and 314-457; these read APQV…ELQL, HSLP…GKPA, and SSGV…DPHK. The segment covering 276-289 has biased composition (polar residues); that stretch reads RTQSSGPGLQNNSP. Residues 329–341 are compositionally biased toward basic and acidic residues; the sequence is GVEEAEKKMKEEG. 7 positions are modified to phosphoserine: Ser-343, Ser-345, Ser-356, Ser-373, Ser-385, Ser-386, and Ser-397. The segment covering 365 to 376 has biased composition (polar residues); the sequence is TQVTEAEGSQGT. The span at 439–450 shows a compositional bias: low complexity; sequence RCPPRSRTTGPR.

It belongs to the CENP-T/CNN1 family. In terms of assembly, component of the CENPA-CAD complex, composed of CENPI, CENPK, CENPL, CENPO, CENPP, CENPQ, CENPR and CENPS. The CENPA-CAD complex is probably recruited on centromeres by the CENPA-NAC complex, at least composed of CENPA, CENPC, CENPH, CENPM, CENPN, CENPT and CENPU. Identified in a centromeric complex containing histones H2A, H2B, H3 and H4, and at least CENPA, CENPB, CENPC, CENPT, CENPN, HJURP, SUPT16H, SSRP1 and RSF1. Interacts (via N-terminus) with the NDC80 complex. Heterodimer with CENPW; this dimer coassembles with CENPS-CENPX heterodimers at centromeres to form the tetrameric CENP-T-W-S-X complex. In terms of processing, dynamically phosphorylated during the cell cycle. Phosphorylated during G2 phase, metaphase and anaphase, but not during telophase or G1 phase.

The protein localises to the nucleus. It is found in the chromosome. It localises to the centromere. The protein resides in the kinetochore. Its function is as follows. Component of the CENPA-NAC (nucleosome-associated) complex, a complex that plays a central role in assembly of kinetochore proteins, mitotic progression and chromosome segregation. The CENPA-NAC complex recruits the CENPA-CAD (nucleosome distal) complex and may be involved in incorporation of newly synthesized CENPA into centromeres. Part of a nucleosome-associated complex that binds specifically to histone H3-containing nucleosomes at the centromere, as opposed to nucleosomes containing CENPA. Component of the heterotetrameric CENP-T-W-S-X complex that binds and supercoils DNA, and plays an important role in kinetochore assembly. CENPT has a fundamental role in kinetochore assembly and function. It is one of the inner kinetochore proteins, with most further proteins binding downstream. Required for normal chromosome organization and normal progress through mitosis. The protein is Centromere protein T (CENPT) of Macaca fascicularis (Crab-eating macaque).